The primary structure comprises 404 residues: Keratin, type I cuticular Ha3-I (404 aa).

The segment at 1–56 (MSYSCGLPNLSCRTSCSSRPCVPPSCHGCTLPGACNIPANVSNCNWFCEGSFNGSE) is head. The 312-residue stretch at 56 to 367 (EKETMQFLND…SLLESEDCKL (312 aa)) folds into the IF rod domain. The tract at residues 57-91 (KETMQFLNDRLASYLEKVRQLERDNAELENLIRER) is coil 1A. Residues 92–102 (SQQQEPLVCAS) are linker 1. Positions 103–203 (YQSYFKTIEE…HEQEVNTLRC (101 aa)) are coil 1B. The linker 12 stretch occupies residues 204–219 (QLGGRLNVEVDAAPAV). The coil 2 stretch occupies residues 220-363 (DLNQVLNETR…NTYRSLLESE (144 aa)). A tail region spans residues 364–404 (DCKLPSNPCAITNACDKSTGPCISNPCGPRARCGPCNTFGY).

The protein belongs to the intermediate filament family.

This chain is Keratin, type I cuticular Ha3-I, found in Pan troglodytes (Chimpanzee).